The sequence spans 315 residues: Aspartate carbamoyltransferase catalytic subunit (315 aa).

Residues Arg-65 and Thr-66 each coordinate carbamoyl phosphate. An L-aspartate-binding site is contributed by Lys-93. 3 residues coordinate carbamoyl phosphate: Arg-115, His-145, and Gln-148. Residues Arg-179 and Arg-234 each coordinate L-aspartate. The carbamoyl phosphate site is built by Gly-275 and Pro-276.

This sequence belongs to the aspartate/ornithine carbamoyltransferase superfamily. ATCase family. Heterododecamer (2C3:3R2) of six catalytic PyrB chains organized as two trimers (C3), and six regulatory PyrI chains organized as three dimers (R2).

It catalyses the reaction carbamoyl phosphate + L-aspartate = N-carbamoyl-L-aspartate + phosphate + H(+). It participates in pyrimidine metabolism; UMP biosynthesis via de novo pathway; (S)-dihydroorotate from bicarbonate: step 2/3. In terms of biological role, catalyzes the condensation of carbamoyl phosphate and aspartate to form carbamoyl aspartate and inorganic phosphate, the committed step in the de novo pyrimidine nucleotide biosynthesis pathway. The protein is Aspartate carbamoyltransferase catalytic subunit of Xanthomonas axonopodis pv. citri (strain 306).